The sequence spans 29 residues: Cyclotide mech-3 (29 aa).

Residues 1–29 (GLPTCGETCTLGKCNTPKCTCNWPICYKN) constitute a cross-link (cyclopeptide (Gly-Asn)). Intrachain disulfides connect C5–C19, C9–C21, and C14–C26.

This is a cyclic peptide. In terms of processing, contains 3 disulfide bonds.

Its function is as follows. Probably participates in a plant defense mechanism (Potential). Binds to and induces leakage in phospholipd membranes, particularly ones containing 1-palmitoyl-2-oleophosphatidylethanolamine (POPE). In vitro, displays cytotoxicity against cultured cells but no hemolytic activity towards fresh erythrocytes. This Melicytus chathamicus (Chatham Island mahoe) protein is Cyclotide mech-3.